We begin with the raw amino-acid sequence, 352 residues long: MKQRKIIHIDCDCFYAAIEMRDDPSLANRPLAVGGSADRRGVIATCNYEARAYGVRSAMSSRHALKLCPDLLIVKPRFEVYRSVSREIHGIFRQFTDLIEPLSLDEAYLDVSDSPHFAGSATRIAQEIRRRVAQELHITVSAGVAPNKFLAKIASDWRKPNGLFVITPDQVDEFVTALPVSKLHGVGKVTADKLTRLGIRTCLDLRDWNKLALVREFGSFGERLWRLAHGIDEREVKVDSRRQSLSVEHTYDQDLPDLQSCLEKLPALLEEMNGRLQRLDASYRPDKPFVKVKFHDFTQTTLEQAGASRDLDSYRQLLASAHARGDKPVRLLGVGVRLHDLRGRQEQLELFA.

The UmuC domain maps to 6-187 (IIHIDCDCFY…LPVSKLHGVG (182 aa)). Mg(2+)-binding residues include Asp10 and Asp105. The active site involves Glu106.

Belongs to the DNA polymerase type-Y family. Monomer. Mg(2+) is required as a cofactor.

The protein resides in the cytoplasm. The enzyme catalyses DNA(n) + a 2'-deoxyribonucleoside 5'-triphosphate = DNA(n+1) + diphosphate. Functionally, poorly processive, error-prone DNA polymerase involved in untargeted mutagenesis. Copies undamaged DNA at stalled replication forks, which arise in vivo from mismatched or misaligned primer ends. These misaligned primers can be extended by PolIV. Exhibits no 3'-5' exonuclease (proofreading) activity. May be involved in translesional synthesis, in conjunction with the beta clamp from PolIII. The protein is DNA polymerase IV of Ectopseudomonas mendocina (strain ymp) (Pseudomonas mendocina).